A 277-amino-acid chain; its full sequence is Ribosomal RNA small subunit methyltransferase I (277 aa).

It belongs to the methyltransferase superfamily. RsmI family.

Its subcellular location is the cytoplasm. It carries out the reaction cytidine(1402) in 16S rRNA + S-adenosyl-L-methionine = 2'-O-methylcytidine(1402) in 16S rRNA + S-adenosyl-L-homocysteine + H(+). In terms of biological role, catalyzes the 2'-O-methylation of the ribose of cytidine 1402 (C1402) in 16S rRNA. In Mycoplasma genitalium (strain ATCC 33530 / DSM 19775 / NCTC 10195 / G37) (Mycoplasmoides genitalium), this protein is Ribosomal RNA small subunit methyltransferase I.